The primary structure comprises 885 residues: Exosome complex component 10 (885 aa).

Residues 1 to 10 are compositionally biased toward basic and acidic residues; it reads MAPPSPREHQ. 2 disordered regions span residues 1 to 23 and 210 to 232; these read MAPP…PDAE and KPLP…EDLD. A Glycyl lysine isopeptide (Lys-Gly) (interchain with G-Cter in SUMO2) cross-link involves residue K19. Basic and acidic residues predominate over residues 217 to 230; it reads SKERRERPQDRPED. In terms of domain architecture, 3'-5' exonuclease spans 289 to 455; the sequence is HVVSSLDELV…YIYDRMRLEL (167 aa). Mg(2+) is bound by residues D313, E315, D371, and D440. In terms of domain architecture, HRDC spans 503–583; sequence NSQQLTAFQL…QQAREMPLLK (81 aa). K583 participates in a covalent cross-link: Glycyl lysine isopeptide (Lys-Gly) (interchain with G-Cter in SUMO1); alternate. K583 participates in a covalent cross-link: Glycyl lysine isopeptide (Lys-Gly) (interchain with G-Cter in SUMO2); alternate. K710 participates in a covalent cross-link: Glycyl lysine isopeptide (Lys-Gly) (interchain with G-Cter in SUMO2). A disordered region spans residues 730-885; it reads VQKEPKEAAK…RGFRHNWPKR (156 aa). Basic and acidic residues-rich tracts occupy residues 732–756 and 776–794; these read KEPK…KEES and ATKK…EQKQ. S821 carries the post-translational modification Phosphoserine. Glycyl lysine isopeptide (Lys-Gly) (interchain with G-Cter in SUMO2) cross-links involve residues K833, K859, and K873.

The protein belongs to the exosome component 10/RRP6 family. In terms of assembly, component of the RNA exosome complex. The catalytically inactive RNA exosome core complex (Exo-9) associates with the catalytic subunit EXOSC10/RRP6 (via its N-terminus). Exo-9 may associate with DIS3 to form the nucleolar exosome complex, or DIS3L to form the cytoplasmic exosome complex. The RNA exosome complex interacts with cofactors C1D/RRP47, MPHOSPH6/MPP6 and MTREX/MTR4. Interacts with MTREX; the interaction with MTREX mediates the association of MTREX with nuclear RNA exosomes. Part of the small subunit (SSU) processome, composed of more than 70 proteins and the RNA chaperone small nucleolar RNA (snoRNA) U3. Interacts with ALYREF/THOC4. Interacts with DHX36; this interaction occurs in a RNase-insensitive manner. Interacts with NRDE2. Interacts (via C-terminus) with USP36 (via C-terminus); the interaction is facilitated by the association with RNA and promotes sumoylation of EXOSC10. The cofactor is Mg(2+). Sumoylated by USP36; sumoylation does not significantly affect EXOSC10 nucleolar localization and association with core exosome and USP36, but regulates the nucleolar RNA exosome activity in rRNA processing by promoting binding of EXOSC10 to pre-rRNAs. Effects of sumoylation on EXOSC10 levels vary between different studies. Sumoylation of EXOSC10 is required for the modulation of EXOSC10 effects on cellular protein translation and cell proliferation. Sumoylation is promoted by mild hypothermia. As to expression, expressed in testis (at protein level).

The protein localises to the cytoplasm. It localises to the nucleus. Its subcellular location is the nucleolus. The protein resides in the nucleoplasm. Functionally, catalytic component of the RNA exosome complex which has 3'-&gt;5' exoribonuclease activity and participates in a multitude of cellular RNA processing and degradation events. In the nucleus, the RNA exosome complex is involved in proper maturation of stable RNA species such as rRNA, snRNA and snoRNA, in the elimination of RNA processing by-products and non-coding 'pervasive' transcripts, such as antisense RNA species and promoter-upstream transcripts (PROMPTs), and of mRNAs with processing defects, thereby limiting or excluding their export to the cytoplasm. Part of the small subunit (SSU) processome, first precursor of the small eukaryotic ribosomal subunit. During the assembly of the SSU processome in the nucleolus, many ribosome biogenesis factors, an RNA chaperone and ribosomal proteins associate with the nascent pre-rRNA and work in concert to generate RNA folding, modifications, rearrangements and cleavage as well as targeted degradation of pre-ribosomal RNA by the RNA exosome. The RNA exosome may be involved in Ig class switch recombination (CSR) and/or Ig variable region somatic hypermutation (SHM) by targeting AICDA deamination activity to transcribed dsDNA substrates. In the cytoplasm, the RNA exosome complex is involved in general mRNA turnover and specifically degrades inherently unstable mRNAs containing AU-rich elements (AREs) within their 3' untranslated regions, and in RNA surveillance pathways, preventing translation of aberrant mRNAs. It seems to be involved in degradation of histone mRNA. EXOSC10 is required for nucleolar localization of C1D and probably mediates the association of MTREX, C1D and MPHOSPH6 with the RNA exosome involved in the maturation of 5.8S rRNA. Plays a role in the recruitment of replication protein A complex (RPA) and RAD51 to DNA double-strand breaks caused by irradiation, contributing to DNA repair by homologous recombination. Regulates levels of damage-induced RNAs in order to prevent DNA-RNA hybrid formation at DNA double-strand breaks and limit DNA end resection after damage. Plays a role in oocyte development, maturation and survival. Required for normal testis development and mitotic division of spermatogonia. Plays a role in proper embryo development. Required for global protein translation. Required for cell proliferation. The chain is Exosome complex component 10 from Rattus norvegicus (Rat).